The sequence spans 233 residues: NAD(P)H-hydrate epimerase (233 aa).

One can recognise a YjeF N-terminal domain in the interval 15–218 (SQQFDVELMS…KLQEKYNFIV (204 aa)). 67–71 (NNGGD) contacts (6S)-NADPHX. 2 residues coordinate K(+): Asn-68 and Asp-128. (6S)-NADPHX contacts are provided by residues 132–138 (GFSFKPP), Tyr-143, and Asp-161. Ser-164 lines the K(+) pocket.

Belongs to the NnrE/AIBP family. It depends on K(+) as a cofactor.

It carries out the reaction (6R)-NADHX = (6S)-NADHX. It catalyses the reaction (6R)-NADPHX = (6S)-NADPHX. Functionally, catalyzes the epimerization of the S- and R-forms of NAD(P)HX, a damaged form of NAD(P)H that is a result of enzymatic or heat-dependent hydration. This is a prerequisite for the S-specific NAD(P)H-hydrate dehydratase to allow the repair of both epimers of NAD(P)HX. This chain is NAD(P)H-hydrate epimerase, found in Paramecium tetraurelia.